We begin with the raw amino-acid sequence, 234 residues long: Carboxy-S-adenosyl-L-methionine synthase (234 aa).

S-adenosyl-L-methionine is bound by residues Tyr-35, 60–62, 83–84, Asn-124, and Arg-191; these read GSS and DN.

It belongs to the class I-like SAM-binding methyltransferase superfamily. Cx-SAM synthase family. In terms of assembly, homodimer.

It carries out the reaction prephenate + S-adenosyl-L-methionine = carboxy-S-adenosyl-L-methionine + 3-phenylpyruvate + H2O. In terms of biological role, catalyzes the conversion of S-adenosyl-L-methionine (SAM) to carboxy-S-adenosyl-L-methionine (Cx-SAM). The polypeptide is Carboxy-S-adenosyl-L-methionine synthase (Nautilia profundicola (strain ATCC BAA-1463 / DSM 18972 / AmH)).